The following is a 1505-amino-acid chain: Homeobox protein cut-like 1 (1505 aa).

Positions L56–S407 form a coiled coil. Polar residues-rich tracts occupy residues N396–S407 and E440–F451. Disordered stretches follow at residues N396 to G455, Y512 to D552, P646 to E669, and L682 to D704. Low complexity predominate over residues S516 to S546. A Phosphoserine modification is found at E540. Residues A542–R629 constitute a DNA-binding region (CUT 1). Over residues S694–D703 the composition is skewed to low complexity. A Phosphoserine modification is found at S763. The disordered stretch occupies residues S768 to C802. Residues K785, K811, and K842 each participate in a glycyl lysine isopeptide (Lys-Gly) (interchain with G-Cter in SUMO2) cross-link. Residues G815–G853 are compositionally biased toward basic and acidic residues. A disordered region spans residues G815–L930. Polar residues-rich tracts occupy residues S868–E877 and S887–L911. A Phosphoserine modification is found at S909. A DNA-binding region (CUT 2) is located at residues Q934–Q1021. The span at L1036 to T1049 shows a compositional bias: polar residues. The interval L1036–G1110 is disordered. Residues S1050 to S1066 show a composition bias toward low complexity. S1059 and S1069 each carry phosphoserine. A DNA-binding region (CUT 3) is located at residues Q1117–M1204. The segment at M1210–P1247 is disordered. Residues T1230 to H1242 are compositionally biased toward polar residues. Positions L1244–L1303 form a DNA-binding region, homeobox. S1270 is subject to Phosphoserine. K1284 participates in a covalent cross-link: Glycyl lysine isopeptide (Lys-Gly) (interchain with G-Cter in SUMO2). The tract at residues S1312–K1480 is disordered. A compositionally biased stretch (low complexity) spans A1316–S1333. S1337 is modified (phosphoserine). Basic and acidic residues-rich tracts occupy residues E1353–R1368 and D1384–G1394. Low complexity-rich tracts occupy residues P1405 to S1436 and N1443 to S1455. A Phosphoserine modification is found at S1455. Residues G1467 to L1476 show a composition bias toward basic and acidic residues. Residues S1486 and S1496 each carry the phosphoserine modification.

It belongs to the CUT homeobox family. In terms of assembly, interacts with BANP. Interacts with SATB1 (via DNA-binding domains); the interaction inhibits the attachment of both proteins to DNA. Post-translationally, phosphorylated by PKA. In terms of processing, as cells progress into S phase, a fraction of CUX1 molecules is proteolytically processed into N-terminally truncated proteins of 110 kDa by CTSL. Cell cycle-dependent processing of CUX1 serves to generate a CDP/Cux p110 with distinct DNA binding and transcriptional properties.

The protein localises to the nucleus. Functionally, transcription factor involved in the control of neuronal differentiation in the brain. Regulates dendrite development and branching, and dendritic spine formation in cortical layers II-III. Also involved in the control of synaptogenesis. In addition, it has probably a broad role in mammalian development as a repressor of developmentally regulated gene expression. May act by preventing binding of positively-activing CCAAT factors to promoters. Component of nf-munr repressor; binds to the matrix attachment regions (MARs) (5' and 3') of the immunoglobulin heavy chain enhancer. Represses T-cell receptor (TCR) beta enhancer function by binding to MARbeta, an ATC-rich DNA sequence located upstream of the TCR beta enhancer. Binds to the TH enhancer; may require the basic helix-loop-helix protein TCF4 as a coactivator. Plays a role in cell cycle progression, in particular at the G1/S transition. As cells progress into S phase, a fraction of CUX1 molecules is proteolytically processed into N-terminally truncated proteins of 110 kDa. While CUX1 only transiently binds to DNA and carries the CCAAT-displacement activity, CDP/Cux p110 makes a stable interaction with DNA and stimulates expression of genes such as POLA1. In Homo sapiens (Human), this protein is Homeobox protein cut-like 1.